We begin with the raw amino-acid sequence, 304 residues long: Acetyl-coenzyme A carboxylase carboxyl transferase subunit beta (304 aa).

The region spanning 23–292 is the CoA carboxyltransferase N-terminal domain; that stretch reads VWTKCDSCGQ…PNPEAPREGV (270 aa). The Zn(2+) site is built by Cys27, Cys30, Cys46, and Cys49. The C4-type zinc-finger motif lies at 27–49; the sequence is CDSCGQVLYRAELERNLEVCPKC. The segment at 284–304 is disordered; sequence NPEAPREGVVVPPVPDQEPEA. Residues 295–304 are compositionally biased toward pro residues; sequence PPVPDQEPEA.

This sequence belongs to the AccD/PCCB family. As to quaternary structure, acetyl-CoA carboxylase is a heterohexamer composed of biotin carboxyl carrier protein (AccB), biotin carboxylase (AccC) and two subunits each of ACCase subunit alpha (AccA) and ACCase subunit beta (AccD). It depends on Zn(2+) as a cofactor.

The protein resides in the cytoplasm. It carries out the reaction N(6)-carboxybiotinyl-L-lysyl-[protein] + acetyl-CoA = N(6)-biotinyl-L-lysyl-[protein] + malonyl-CoA. It functions in the pathway lipid metabolism; malonyl-CoA biosynthesis; malonyl-CoA from acetyl-CoA: step 1/1. Its function is as follows. Component of the acetyl coenzyme A carboxylase (ACC) complex. Biotin carboxylase (BC) catalyzes the carboxylation of biotin on its carrier protein (BCCP) and then the CO(2) group is transferred by the transcarboxylase to acetyl-CoA to form malonyl-CoA. This is Acetyl-coenzyme A carboxylase carboxyl transferase subunit beta from Escherichia coli O139:H28 (strain E24377A / ETEC).